Consider the following 82-residue polypeptide: MVTIRLSRGGSKKRPFYQIVVADSRSPRDGRFIERVGFFNPLASGNVERVRINLDRVNHWIGHGASLSDRVASLVKEAQKAA.

It belongs to the bacterial ribosomal protein bS16 family.

The protein is Small ribosomal subunit protein bS16 of Histophilus somni (strain 2336) (Haemophilus somnus).